Consider the following 236-residue polypeptide: tRNA1(Val) (adenine(37)-N6)-methyltransferase (236 aa).

The protein belongs to the methyltransferase superfamily. tRNA (adenine-N(6)-)-methyltransferase family.

Its subcellular location is the cytoplasm. The enzyme catalyses adenosine(37) in tRNA1(Val) + S-adenosyl-L-methionine = N(6)-methyladenosine(37) in tRNA1(Val) + S-adenosyl-L-homocysteine + H(+). Its function is as follows. Specifically methylates the adenine in position 37 of tRNA(1)(Val) (anticodon cmo5UAC). This chain is tRNA1(Val) (adenine(37)-N6)-methyltransferase, found in Actinobacillus succinogenes (strain ATCC 55618 / DSM 22257 / CCUG 43843 / 130Z).